Here is a 396-residue protein sequence, read N- to C-terminus: Ribosomal RNA large subunit methyltransferase I (396 aa).

In terms of domain architecture, PUA spans threonine 2–arginine 81.

Belongs to the methyltransferase superfamily. RlmI family.

Its subcellular location is the cytoplasm. It carries out the reaction cytidine(1962) in 23S rRNA + S-adenosyl-L-methionine = 5-methylcytidine(1962) in 23S rRNA + S-adenosyl-L-homocysteine + H(+). In terms of biological role, specifically methylates the cytosine at position 1962 (m5C1962) of 23S rRNA. This is Ribosomal RNA large subunit methyltransferase I from Yersinia pseudotuberculosis serotype O:1b (strain IP 31758).